The sequence spans 232 residues: UPF0758 protein EF_2926 (232 aa).

The region spanning 107–229 (KVTSSQQVAQ…YISLREENFF (123 aa)) is the MPN domain. Zn(2+) contacts are provided by His-178, His-180, and Asp-191. Residues 178–191 (HNHPSGNPTPSPQD) carry the JAMM motif motif.

This sequence belongs to the UPF0758 family.

In Enterococcus faecalis (strain ATCC 700802 / V583), this protein is UPF0758 protein EF_2926.